The chain runs to 510 residues: Probable gamma-aminobutyrate transaminase 3, mitochondrial (510 aa).

Residues 1–41 constitute a mitochondrion transit peptide; that stretch reads MICRSLLLLRSNAASKASNIVKHVAATGCLPKYSSEAPARY. 166 to 167 contributes to the pyridoxal 5'-phosphate binding site; it reads GS. Tyrosine 199 lines the substrate pocket. Aspartate 306 contributes to the pyridoxal 5'-phosphate binding site. Lysine 335 provides a ligand contact to substrate. Lysine 335 bears the N6-(pyridoxal phosphate)lysine mark.

This sequence belongs to the class-III pyridoxal-phosphate-dependent aminotransferase family.

The protein resides in the mitochondrion. It catalyses the reaction 4-aminobutanoate + pyruvate = succinate semialdehyde + L-alanine. The catalysed reaction is 4-aminobutanoate + glyoxylate = succinate semialdehyde + glycine. Functionally, transaminase that degrades gamma-amino butyric acid (GABA). This is Probable gamma-aminobutyrate transaminase 3, mitochondrial from Oryza sativa subsp. japonica (Rice).